A 524-amino-acid chain; its full sequence is Glutamyl-tRNA(Gln) amidotransferase subunit A, mitochondrial (524 aa).

Residues lysine 76 and serine 171 each act as charge relay system in the active site. Catalysis depends on serine 195, which acts as the Acyl-ester intermediate.

This sequence belongs to the amidase family. GatA subfamily. Subunit of the heterotrimeric GatCAB amidotransferase (AdT) complex, composed of A (qrsl1), B (gatb) and C (gatc) subunits.

It is found in the mitochondrion. It catalyses the reaction L-glutamyl-tRNA(Gln) + L-glutamine + ATP + H2O = L-glutaminyl-tRNA(Gln) + L-glutamate + ADP + phosphate + H(+). Allows the formation of correctly charged Gln-tRNA(Gln) through the transamidation of misacylated Glu-tRNA(Gln) in the mitochondria. The reaction takes place in the presence of glutamine and ATP through an activated gamma-phospho-Glu-tRNA(Gln). The polypeptide is Glutamyl-tRNA(Gln) amidotransferase subunit A, mitochondrial (qrsl1) (Xenopus laevis (African clawed frog)).